The primary structure comprises 1283 residues: Rab11 family-interacting protein 1 (1283 aa).

Residues M1 to Y126 form the C2 domain. Residues S161–G185 show a composition bias toward basic and acidic residues. Positions S161–T281 are disordered. Phosphoserine occurs at positions 184, 202, 206, and 234. A compositionally biased stretch (polar residues) spans N225–P239. Positions W257 to S266 are enriched in acidic residues. S300, S315, S339, S341, S343, S345, S356, S357, and S382 each carry phosphoserine. 5 disordered regions span residues E330 to P727, V741 to P782, P835 to M913, D969 to T993, and A1037 to N1141. The segment covering A419 to R433 has biased composition (basic and acidic residues). S435 is subject to Phosphoserine. The span at G442–E451 shows a compositional bias: basic and acidic residues. The residue at position 477 (S477) is a Phosphoserine. The span at D482–T491 shows a compositional bias: basic and acidic residues. Phosphoserine occurs at positions 529 and 545. Low complexity predominate over residues S588–I612. Positions Q637–L652 are enriched in polar residues. Over residues E698–D715 the composition is skewed to basic and acidic residues. The residue at position 758 (S758) is a Phosphoserine. Residues E855–S866 show a composition bias toward basic and acidic residues. A compositionally biased stretch (acidic residues) spans V975–G986. The segment covering A1037–E1048 has biased composition (polar residues). The span at S1116–T1131 shows a compositional bias: basic and acidic residues. S1135 bears the Phosphoserine mark. An FIP-RBD domain is found at K1211–P1273. The necessary for interaction with RAB4A and RAB11A, subcellular location and endosomal recycling stretch occupies residues A1219–M1283.

In terms of assembly, interacts with RAB11A (GTP-bound form); the interaction induces RAB11FIP1 recruitment to membranes. Interacts with RAB14 (GTP-bound form). As to quaternary structure, homooligomer. Isoform 2 interacts with RAB4A, RAB11A, RAB11B and RAB25. According to PubMed:15280022, RAB4A binding to RAB11FIP1 is of very low affinity in vitro and in vivo. In terms of tissue distribution, isoform 2 is expressed in brain, heart, testis, lung, spleen, ovary and small intestine.

It is found in the recycling endosome. Its subcellular location is the cytoplasmic vesicle. It localises to the phagosome membrane. A Rab11 effector protein involved in the endosomal recycling process. Also involved in controlling membrane trafficking along the phagocytic pathway and in phagocytosis. Interaction with RAB14 may function in the process of neurite formation. The protein is Rab11 family-interacting protein 1 of Homo sapiens (Human).